Reading from the N-terminus, the 71-residue chain is Small ribosomal subunit protein bS18 (71 aa).

It belongs to the bacterial ribosomal protein bS18 family. In terms of assembly, part of the 30S ribosomal subunit. Forms a tight heterodimer with protein bS6.

Functionally, binds as a heterodimer with protein bS6 to the central domain of the 16S rRNA, where it helps stabilize the platform of the 30S subunit. In Synechocystis sp. (strain ATCC 27184 / PCC 6803 / Kazusa), this protein is Small ribosomal subunit protein bS18.